The sequence spans 173 residues: Translation initiation factor IF-3 (173 aa).

It belongs to the IF-3 family. In terms of assembly, monomer.

The protein resides in the cytoplasm. Functionally, IF-3 binds to the 30S ribosomal subunit and shifts the equilibrium between 70S ribosomes and their 50S and 30S subunits in favor of the free subunits, thus enhancing the availability of 30S subunits on which protein synthesis initiation begins. The sequence is that of Translation initiation factor IF-3 from Campylobacter lari (strain RM2100 / D67 / ATCC BAA-1060).